Here is a 203-residue protein sequence, read N- to C-terminus: A-type ATP synthase subunit E (203 aa).

The protein belongs to the V-ATPase E subunit family. As to quaternary structure, has multiple subunits with at least A(3), B(3), C, D, E, F, H, I and proteolipid K(x).

It localises to the cell membrane. In terms of biological role, component of the A-type ATP synthase that produces ATP from ADP in the presence of a proton gradient across the membrane. The protein is A-type ATP synthase subunit E of Methanococcus aeolicus (strain ATCC BAA-1280 / DSM 17508 / OCM 812 / Nankai-3).